Reading from the N-terminus, the 456-residue chain is Chromosomal replication initiator protein DnaA (456 aa).

Positions 1-83 are domain I, interacts with DnaA modulators; the sequence is MTASLWQQCL…LRFDIGNRPH (83 aa). Residues 83-119 form a domain II region; sequence HPVAIARAPARGAAPVNNLQKSWESKADAKPEPNHKS. Residues 120-336 are domain III, AAA+ region; it reads NTNVNYTFEN…GALNRVIANA (217 aa). ATP contacts are provided by Gly-164, Gly-166, Lys-167, and Thr-168. The segment at 337–456 is domain IV, binds dsDNA; it reads NFTGRAINID…YSNLIRTLSS (120 aa).

This sequence belongs to the DnaA family. Oligomerizes as a right-handed, spiral filament on DNA at oriC.

The protein resides in the cytoplasm. Its function is as follows. Plays an essential role in the initiation and regulation of chromosomal replication. ATP-DnaA binds to the origin of replication (oriC) to initiate formation of the DNA replication initiation complex once per cell cycle. Binds the DnaA box (a 9 base pair repeat at the origin) and separates the double-stranded (ds)DNA. Forms a right-handed helical filament on oriC DNA; dsDNA binds to the exterior of the filament while single-stranded (ss)DNA is stabiized in the filament's interior. The ATP-DnaA-oriC complex binds and stabilizes one strand of the AT-rich DNA unwinding element (DUE), permitting loading of DNA polymerase. After initiation quickly degrades to an ADP-DnaA complex that is not apt for DNA replication. Binds acidic phospholipids. The polypeptide is Chromosomal replication initiator protein DnaA (Aeromonas salmonicida (strain A449)).